Here is a 257-residue protein sequence, read N- to C-terminus: Hydroxyacylglutathione hydrolase (257 aa).

Residues His-54, His-56, Asp-58, His-59, His-113, Asp-137, and His-175 each contribute to the Zn(2+) site.

It belongs to the metallo-beta-lactamase superfamily. Glyoxalase II family. As to quaternary structure, monomer. Zn(2+) serves as cofactor.

It carries out the reaction an S-(2-hydroxyacyl)glutathione + H2O = a 2-hydroxy carboxylate + glutathione + H(+). The protein operates within secondary metabolite metabolism; methylglyoxal degradation; (R)-lactate from methylglyoxal: step 2/2. Thiolesterase that catalyzes the hydrolysis of S-D-lactoyl-glutathione to form glutathione and D-lactic acid. The chain is Hydroxyacylglutathione hydrolase from Nostoc sp. (strain PCC 7120 / SAG 25.82 / UTEX 2576).